A 264-amino-acid polypeptide reads, in one-letter code: Endonuclease V (264 aa).

The Mg(2+) site is built by Asp-72 and Asp-137.

It belongs to the endonuclease V family. Mg(2+) serves as cofactor.

Its subcellular location is the cytoplasm. It catalyses the reaction Endonucleolytic cleavage at apurinic or apyrimidinic sites to products with a 5'-phosphate.. In terms of biological role, DNA repair enzyme involved in the repair of deaminated bases. Selectively cleaves double-stranded DNA at the second phosphodiester bond 3' to a deoxyinosine leaving behind the intact lesion on the nicked DNA. This is Endonuclease V from Halobacterium salinarum (strain ATCC 700922 / JCM 11081 / NRC-1) (Halobacterium halobium).